Here is a 112-residue protein sequence, read N- to C-terminus: T cell receptor alpha variable 41 (112 aa).

A signal peptide spans 1 to 21 (MVKIRQFLLAILWLQLSCVSA). The 89-residue stretch at 24 to 112 (NEVEQSPQNL…DSAVYICAVR (89 aa)) folds into the Ig-like domain. 2 N-linked (GlcNAc...) asparagine glycosylation sites follow: asparagine 32 and asparagine 44. Cysteine 45 and cysteine 109 are disulfide-bonded.

In terms of assembly, alpha-beta TR is a heterodimer composed of an alpha and beta chain; disulfide-linked. The alpha-beta TR is associated with the transmembrane signaling CD3 coreceptor proteins to form the TR-CD3 (TcR or TCR). The assembly of alpha-beta TR heterodimers with CD3 occurs in the endoplasmic reticulum where a single alpha-beta TR heterodimer associates with one CD3D-CD3E heterodimer, one CD3G-CD3E heterodimer and one CD247 homodimer forming a stable octameric structure. CD3D-CD3E and CD3G-CD3E heterodimers preferentially associate with TR alpha and TR beta chains, respectively. The association of the CD247 homodimer is the last step of TcR assembly in the endoplasmic reticulum and is required for transport to the cell surface.

It is found in the cell membrane. Its function is as follows. V region of the variable domain of T cell receptor (TR) alpha chain that participates in the antigen recognition. Alpha-beta T cell receptors are antigen specific receptors which are essential to the immune response and are present on the cell surface of T lymphocytes. Recognize peptide-major histocompatibility (MH) (pMH) complexes that are displayed by antigen presenting cells (APC), a prerequisite for efficient T cell adaptive immunity against pathogens. Binding of alpha-beta TR to pMH complex initiates TR-CD3 clustering on the cell surface and intracellular activation of LCK that phosphorylates the ITAM motifs of CD3G, CD3D, CD3E and CD247 enabling the recruitment of ZAP70. In turn ZAP70 phosphorylates LAT, which recruits numerous signaling molecules to form the LAT signalosome. The LAT signalosome propagates signal branching to three major signaling pathways, the calcium, the mitogen-activated protein kinase (MAPK) kinase and the nuclear factor NF-kappa-B (NF-kB) pathways, leading to the mobilization of transcription factors that are critical for gene expression and essential for T cell growth and differentiation. The T cell repertoire is generated in the thymus, by V-(D)-J rearrangement. This repertoire is then shaped by intrathymic selection events to generate a peripheral T cell pool of self-MH restricted, non-autoaggressive T cells. Post-thymic interaction of alpha-beta TR with the pMH complexes shapes TR structural and functional avidity. In Homo sapiens (Human), this protein is T cell receptor alpha variable 41.